The primary structure comprises 362 residues: Adenosine deaminase (362 aa).

Residues His-19 and His-21 each coordinate Zn(2+). Substrate-binding residues include His-21, Asp-23, and Gly-181. His-208 provides a ligand contact to Zn(2+). Glu-211 acts as the Proton donor in catalysis. Asp-300 contributes to the Zn(2+) binding site.

The protein belongs to the metallo-dependent hydrolases superfamily. Adenosine and AMP deaminases family. Adenosine deaminase subfamily. The cofactor is Zn(2+).

The enzyme catalyses adenosine + H2O + H(+) = inosine + NH4(+). It carries out the reaction 2'-deoxyadenosine + H2O + H(+) = 2'-deoxyinosine + NH4(+). Its function is as follows. Catalyzes the hydrolytic deamination of adenosine and 2-deoxyadenosine. This Mycobacterium marinum (strain ATCC BAA-535 / M) protein is Adenosine deaminase.